The chain runs to 262 residues: Catechol O-methyltransferase domain-containing protein 1 (262 aa).

The chain crosses the membrane as a helical; Signal-anchor for type II membrane protein span at residues Ala12–Gly32. Residues Asp108, Gly110–Thr111, Ser116, Glu134, Val135, Ala163, Asp185, Asp187, and Tyr194 contribute to the S-adenosyl-L-methionine site.

It belongs to the class I-like SAM-binding methyltransferase superfamily. Cation-dependent O-methyltransferase family. Homodimer.

It is found in the membrane. Putative O-methyltransferase. In Mus musculus (Mouse), this protein is Catechol O-methyltransferase domain-containing protein 1 (Comtd1).